Here is a 131-residue protein sequence, read N- to C-terminus: Large ribosomal subunit protein bL12 (131 aa).

It belongs to the bacterial ribosomal protein bL12 family. In terms of assembly, homodimer. Part of the ribosomal stalk of the 50S ribosomal subunit. Forms a multimeric L10(L12)X complex, where L10 forms an elongated spine to which 2 to 4 L12 dimers bind in a sequential fashion. Binds GTP-bound translation factors.

Its function is as follows. Forms part of the ribosomal stalk which helps the ribosome interact with GTP-bound translation factors. Is thus essential for accurate translation. This is Large ribosomal subunit protein bL12 from Parasynechococcus marenigrum (strain WH8102).